The following is a 1360-amino-acid chain: MASRQCPPAAVFNSMNPPVNSYVEHCYLRSPNVMAEGMNEMPYCHQTNLMTSHHGFGLAQGSDHLAGTDGSRFSTPRSTMKLSKKRAMSISPLSDASIDLQTMIRTSPNSLVAFINSRCSSASGSYGHLSIGTISPSLGYQNCLNHQRPQAGPYGSNPLMPYNSHEHLSSRGMSMLQPRSSVKHCQLKSEPLSITGLDTIGSKRLEDGSEGDISSPASVGTQDPLLGLLDGRDDLEKDDGKHEPETVYETNCHWESCTKEFDTQEHLVHHINNEHIHGEKKEFVCHWQDCSRELRPFKAQYMLVVHMRRHTGEKPHKCTFEGCNKAYSRLENLKTHLRSHTGEKPYVCEHEGCNKAFSNASDRAKHQNRTHSNEKPYVCKIPGCTKRYTDPSSLRKHVKTVHGPEAHITKKHRGDGMLRAQPGHEGPGNQNVKGENQLDMEASSACKEDGRLAVPDITLKSQPSPGGQSSCSSERSPLGSTNNNDSGVEMNANTGGSFEDLTNLDDIPSVDSMGTAGASALRKLENLRIDKLNQLRKTPSSGKMVKLPSIHNSGPQGDMSVVCGPLGMSHNQHGIELPASSHVNHLNDRRNSTTSTMSSAYTVSRRSSVVSPYLPNQRAGDSGNMVDSYDISTDPSGHSNEAVCASGLPGLTPAQQYRLKAKYAAATGGPPPTPLPNMERMNTNNRMAFASSDYRGSAISSLQRRHSSNEYHNYGTGIIHPAQAPGAGIRRASDPARTGGDIQAVPKVQRFKSMTNMNVSMMGRQGTSIQQAYGGSDANLQRHMFSPRPPSITENVFMETAGPDEVCHTKEQGFIQSNEMQHYMNYQGQGSQLTAPNDHMNFNPQIHGLDGQSQNVYSHSQRAISNMHLNAENYSGQSNVSNFNQCQMTAHNQHFQNTRQAYNCANLPVQWNEVSSGTMDNPVQRPNHQIMHQNMSPGNHCQSQLSNCTVPESTKQGCPVNRNSCQQGMYMNNQKYNHGGQVQVKPEQQFHHSAPAMMSCQNMKHPSRQEHHFTKTNTMPLSSEATNCDYQGQQDSTQNSCFNVGLNLNLLSPPGRRSQTPIMQVKEIMVRNYVQSQQALMWEQHPKSMAMMTNSGDDVDTRQNQHKNTLNAAVYMGPKYMNYQGKPSPNNLMSPSSQDSQSSHTKAMGSPSSQCYNFDMMPHPPCGPKPLSRQHSVSSQSTYMGSPNQLSPSYQSSESSPRRMACLPPIQPQSEVTNNTSMMYYTGQMEMHQSKPGVHKLTTPLNLNQTSCDGHQHGQYNASHSFLKTVPYTSSCPAANTLDSLDLENTQIDFTAIIDDADNALMPGNISPNVLAGSSQASSHLTTLRNTGAVVPNMVVGDLNSMLSSLAGENKYLNTM.

The interval 198–245 (DTIGSKRLEDGSEGDISSPASVGTQDPLLGLLDGRDDLEKDDGKHEPE) is disordered. Residues 230–245 (DGRDDLEKDDGKHEPE) are compositionally biased toward basic and acidic residues. The C2H2-type 1 zinc finger occupies 250 to 275 (TNCHWESCTKEFDTQEHLVHHINNEH). The interaction with DNA stretch occupies residues 298–306 (KAQYMLVVH). 3 C2H2-type zinc fingers span residues 316–340 (HKCTFEGCNKAYSRLENLKTHLRSH), 346–371 (YVCEHEGCNKAFSNASDRAKHQNRTH), and 377–402 (YVCKIPGCTKRYTDPSSLRKHVKTVH). 2 interaction with DNA regions span residues 360–365 (ASDRAK) and 390–396 (DPSSLRK). 4 disordered regions span residues 390–434 (DPSS…NVKG), 457–500 (ITLK…SFED), 718–740 (IIHPAQAPGAGIRRASDPARTGG), and 1120–1213 (YMNY…IQPQ). The segment covering 461-473 (SQPSPGGQSSCSS) has biased composition (low complexity). Residues 474 to 496 (ERSPLGSTNNNDSGVEMNANTGG) are compositionally biased toward polar residues. A compositionally biased stretch (low complexity) spans 1134–1143 (SPSSQDSQSS). Positions 1173-1190 (RQHSVSSQSTYMGSPNQL) are enriched in polar residues.

The protein belongs to the GLI C2H2-type zinc-finger protein family.

The protein localises to the cytoplasm. It localises to the nucleus. In terms of biological role, acts as a transcriptional activator. Binds to the DNA consensus sequence 5'-GACCACCCA-3'. May regulate the transcription of specific genes during normal development. Mediates SHH signaling. Plays a role in cell proliferation and differentiation via its role in SHH signaling. This is Zinc finger protein GLI1 (gli1) from Xenopus laevis (African clawed frog).